The chain runs to 247 residues: V-type proton ATPase subunit D (247 aa).

It belongs to the V-ATPase D subunit family. In terms of assembly, V-ATPase is a heteromultimeric enzyme made up of two complexes: the ATP-hydrolytic V1 complex and the proton translocation V0 complex. The V1 complex consists of three catalytic AB heterodimers that form a heterohexamer, three peripheral stalks each consisting of EG heterodimers, one central rotor including subunits D and F, and the regulatory subunits C and H. The proton translocation complex V0 consists of the proton transport subunit a, a ring of proteolipid subunits c9c'', rotary subunit d, subunits e and f, and the accessory subunits ATP6AP1/Ac45 and ATP6AP2/PRR. Interacts with SNX10.

The protein localises to the membrane. It is found in the cytoplasmic vesicle. It localises to the clathrin-coated vesicle membrane. Its subcellular location is the cytoplasm. The protein resides in the cytoskeleton. The protein localises to the microtubule organizing center. It is found in the centrosome. It localises to the cell projection. Its subcellular location is the cilium. Functionally, subunit of the V1 complex of vacuolar(H+)-ATPase (V-ATPase), a multisubunit enzyme composed of a peripheral complex (V1) that hydrolyzes ATP and a membrane integral complex (V0) that translocates protons. V-ATPase is responsible for acidifying and maintaining the pH of intracellular compartments and in some cell types, is targeted to the plasma membrane, where it is responsible for acidifying the extracellular environment. May play a role in cilium biogenesis through regulation of the transport and the localization of proteins to the cilium. In Mus musculus (Mouse), this protein is V-type proton ATPase subunit D (Atp6v1d).